The sequence spans 35 residues: Jingzhaotoxin F6-27.63 (35 aa).

3 disulfides stabilise this stretch: Cys2–Cys17, Cys9–Cys22, and Cys16–Cys29.

It belongs to the neurotoxin 10 (Hwtx-1) family. 49 (Jztx-F6) subfamily. Expressed by the venom gland.

It is found in the secreted. Its function is as follows. Probable ion channel inhibitor. The sequence is that of Jingzhaotoxin F6-27.63 from Chilobrachys guangxiensis (Chinese earth tiger tarantula).